Consider the following 345-residue polypeptide: Src kinase-associated phosphoprotein 1 (345 aa).

One can recognise a PH domain in the interval 109–212; that stretch reads KIFKQGYLER…WVEQIQFLVK (104 aa). Positions 226–274 are disordered; it reads ETYDDIESTESSPVVGLTNDSENSLQEDDVYESIPGDEETEESEDENYE. The span at 250–272 shows a compositional bias: acidic residues; it reads LQEDDVYESIPGDEETEESEDEN. The region spanning 283 to 344 is the SH3 domain; that stretch reads FYGDYYQGLW…PKDYLTLAFD (62 aa).

It belongs to the SKAP family. Homodimer. Post-translationally, phosphorylated on tyrosines.

The protein localises to the cytoplasm. The protein resides in the nucleus. It localises to the cell membrane. Positively regulates T-cell receptor signaling. Required for optimal conjugation between T-cells and antigen-presenting cells. The sequence is that of Src kinase-associated phosphoprotein 1 (skap1) from Xenopus tropicalis (Western clawed frog).